The chain runs to 325 residues: Acetyl-coenzyme A carboxylase carboxyl transferase subunit alpha (325 aa).

The 255-residue stretch at 44–298 (QLEGRAEQLR…KTAILSNLEE (255 aa)) folds into the CoA carboxyltransferase C-terminal domain.

This sequence belongs to the AccA family. Acetyl-CoA carboxylase is a heterohexamer composed of biotin carboxyl carrier protein (AccB), biotin carboxylase (AccC) and two subunits each of ACCase subunit alpha (AccA) and ACCase subunit beta (AccD).

The protein resides in the cytoplasm. The catalysed reaction is N(6)-carboxybiotinyl-L-lysyl-[protein] + acetyl-CoA = N(6)-biotinyl-L-lysyl-[protein] + malonyl-CoA. It functions in the pathway lipid metabolism; malonyl-CoA biosynthesis; malonyl-CoA from acetyl-CoA: step 1/1. In terms of biological role, component of the acetyl coenzyme A carboxylase (ACC) complex. First, biotin carboxylase catalyzes the carboxylation of biotin on its carrier protein (BCCP) and then the CO(2) group is transferred by the carboxyltransferase to acetyl-CoA to form malonyl-CoA. The sequence is that of Acetyl-coenzyme A carboxylase carboxyl transferase subunit alpha from Acaryochloris marina (strain MBIC 11017).